The chain runs to 98 residues: Nucleoid-associated protein pc0477 (98 aa).

Belongs to the YbaB/EbfC family. In terms of assembly, homodimer.

It is found in the cytoplasm. Its subcellular location is the nucleoid. Binds to DNA and alters its conformation. May be involved in regulation of gene expression, nucleoid organization and DNA protection. This chain is Nucleoid-associated protein pc0477, found in Protochlamydia amoebophila (strain UWE25).